A 197-amino-acid polypeptide reads, in one-letter code: Glycerol-3-phosphate acyltransferase (197 aa).

Helical transmembrane passes span 1–21 (MTALILLLAYLLGSIPFGLLV), 69–89 (LPMLFSVPVHPLLAGAIAVVG), 110–130 (VMLFYSPLFFLSLIAVFLVVL), and 152–172 (VFFTDDIPLTVAVLLLASFIF).

Belongs to the PlsY family. In terms of assembly, probably interacts with PlsX.

The protein resides in the cell membrane. The enzyme catalyses an acyl phosphate + sn-glycerol 3-phosphate = a 1-acyl-sn-glycero-3-phosphate + phosphate. It participates in lipid metabolism; phospholipid metabolism. Functionally, catalyzes the transfer of an acyl group from acyl-phosphate (acyl-PO(4)) to glycerol-3-phosphate (G3P) to form lysophosphatidic acid (LPA). This enzyme utilizes acyl-phosphate as fatty acyl donor, but not acyl-CoA or acyl-ACP. The polypeptide is Glycerol-3-phosphate acyltransferase (Geobacillus kaustophilus (strain HTA426)).